We begin with the raw amino-acid sequence, 219 residues long: Rho-related protein racN (219 aa).

12-19 (GDVTIGKT) contributes to the GTP binding site. Positions 33–41 (YIPTIFDNH) match the Effector region motif. Residues 58–62 (DTGGG) and 114–117 (TKTD) contribute to the GTP site. Cys216 is subject to Cysteine methyl ester. Cys216 carries S-geranylgeranyl cysteine lipidation. The propeptide at 217–219 (IIC) is removed in mature form.

This sequence belongs to the small GTPase superfamily. Rho family.

The protein resides in the cell membrane. The chain is Rho-related protein racN (racN) from Dictyostelium discoideum (Social amoeba).